We begin with the raw amino-acid sequence, 122 residues long: Large ribosomal subunit protein uL14 (122 aa).

It belongs to the universal ribosomal protein uL14 family. As to quaternary structure, part of the 50S ribosomal subunit. Forms a cluster with proteins L3 and L19. In the 70S ribosome, L14 and L19 interact and together make contacts with the 16S rRNA in bridges B5 and B8.

Its function is as follows. Binds to 23S rRNA. Forms part of two intersubunit bridges in the 70S ribosome. The protein is Large ribosomal subunit protein uL14 of Paraburkholderia phytofirmans (strain DSM 17436 / LMG 22146 / PsJN) (Burkholderia phytofirmans).